The sequence spans 406 residues: Argininosuccinate synthase (406 aa).

ATP is bound at residue A8–T16. Residues Y86 and S91 each coordinate L-citrulline. G116 is a binding site for ATP. The L-aspartate site is built by T118, N122, and D123. Residue N122 participates in L-citrulline binding. R126, S175, S184, E261, and Y273 together coordinate L-citrulline.

Belongs to the argininosuccinate synthase family. Type 1 subfamily. In terms of assembly, homotetramer.

Its subcellular location is the cytoplasm. The enzyme catalyses L-citrulline + L-aspartate + ATP = 2-(N(omega)-L-arginino)succinate + AMP + diphosphate + H(+). It participates in amino-acid biosynthesis; L-arginine biosynthesis; L-arginine from L-ornithine and carbamoyl phosphate: step 2/3. The chain is Argininosuccinate synthase from Brachyspira hyodysenteriae (strain ATCC 49526 / WA1).